Here is a 168-residue protein sequence, read N- to C-terminus: SPbeta prophage-derived uncharacterized protein YonX (168 aa).

A coiled-coil region spans residues 1-53 (MNAQLFNLESRLDELENEINTQYCELDTNLDALKSNRIELESQLEKFESSLTN).

The sequence is that of SPbeta prophage-derived uncharacterized protein YonX (yonX) from Bacillus subtilis (strain 168).